A 235-amino-acid chain; its full sequence is Hydroxyacylglutathione hydrolase (235 aa).

Positions 53, 55, 57, 58, 109, 127, and 165 each coordinate Zn(2+).

Belongs to the metallo-beta-lactamase superfamily. Glyoxalase II family. Monomer. Zn(2+) serves as cofactor.

It carries out the reaction an S-(2-hydroxyacyl)glutathione + H2O = a 2-hydroxy carboxylate + glutathione + H(+). It participates in secondary metabolite metabolism; methylglyoxal degradation; (R)-lactate from methylglyoxal: step 2/2. Functionally, thiolesterase that catalyzes the hydrolysis of S-D-lactoyl-glutathione to form glutathione and D-lactic acid. This chain is Hydroxyacylglutathione hydrolase, found in Haemophilus ducreyi (strain 35000HP / ATCC 700724).